A 234-amino-acid chain; its full sequence is Preflagellin peptidase (234 aa).

Position 1 (methionine 1) is a topological domain, cytoplasmic. Residues isoleucine 2 to aspartate 18 traverse the membrane as a helical segment. Residues leucine 19 to glutamate 23 lie on the Extracellular side of the membrane. The helical transmembrane segment at isoleucine 24–isoleucine 46 threads the bilayer. The Cytoplasmic segment spans residues serine 47 to aspartate 49. Residues methionine 50 to leucine 72 traverse the membrane as a helical segment. Residues leucine 73–glycine 78 are Extracellular-facing. A helical transmembrane segment spans residues aspartate 79 to leucine 89. Over isoleucine 90–leucine 110 the chain is Cytoplasmic. A helical transmembrane segment spans residues proline 111–arginine 139. Residues glycine 140 to proline 205 lie on the Extracellular side of the membrane. Residues phenylalanine 206–threonine 217 form a helical membrane-spanning segment. Topologically, residues serine 218–leucine 234 are cytoplasmic.

It belongs to the peptidase A24 family. Archaeal preflagellin peptidase subfamily.

It localises to the cell membrane. It carries out the reaction Cleaves the signal peptide of 3 to 12 amino acids from the N-terminal of preflagellin, usually at Arg-Gly-|- or Lys-Gly-|-, to release flagellin.. Functionally, cleaves the N-terminal leader peptide from preflagellins. This is Preflagellin peptidase (flaK) from Methanocaldococcus jannaschii (strain ATCC 43067 / DSM 2661 / JAL-1 / JCM 10045 / NBRC 100440) (Methanococcus jannaschii).